Here is a 395-residue protein sequence, read N- to C-terminus: Cuticlin-5 (395 aa).

An N-terminal signal peptide occupies residues 1 to 18 (MNFILAVFAIILLQAVRG). The Extracellular segment spans residues 19–358 (EIDNAIVGDP…ELCMTAIGTT (340 aa)). Residues 46-291 (SCVGNFIIKV…DYCDVPSCPD (246 aa)) enclose the ZP domain. 2 N-linked (GlcNAc...) asparagine glycosylation sites follow: Asn-90 and Asn-307. The chain crosses the membrane as a helical span at residues 359–379 (LLVFLNAFLFIISLVSIVHVC). At 380–395 (CFRTSPKLEKTKSTML) the chain is on the cytoplasmic side.

Its subcellular location is the cell membrane. Functionally, plays a role in alae formation in L1 and dauer stage larvae. The chain is Cuticlin-5 from Caenorhabditis elegans.